The sequence spans 111 residues: UPF0125 protein SO_1475 (111 aa).

A disordered region spans residues 88 to 111; the sequence is VRRRRADKAKDEGRANKVTGGRVS.

This sequence belongs to the UPF0125 (RnfH) family.

The sequence is that of UPF0125 protein SO_1475 from Shewanella oneidensis (strain ATCC 700550 / JCM 31522 / CIP 106686 / LMG 19005 / NCIMB 14063 / MR-1).